Here is a 161-residue protein sequence, read N- to C-terminus: Periplasmic chaperone Spy (161 aa).

The N-terminal stretch at Met-1 to Ala-23 is a signal peptide. Residues Ala-140–Glu-161 form a disordered region. Basic and acidic residues predominate over residues Phe-142 to Ala-151.

It belongs to the CpxP/Spy family. Homodimer.

It is found in the periplasm. Its function is as follows. An ATP-independent periplasmic chaperone, decreases protein aggregation and helps protein refolding. Binds substrate over a large region of its convex inner surface. Substrate protein folds while it is bound to chaperone. Increasing Spy flexibility increases its substrate affinity and overall chaperone activity (shown for 3 different substrates). Protects proteins in vitro against tannin inactivation; tannins have antimicrobial activity. Overexpression enhances the stability of otherwise unstable periplasmic proteins. The sequence is that of Periplasmic chaperone Spy from Escherichia coli (strain K12).